A 364-amino-acid chain; its full sequence is Solute carrier family 35 member C2 (364 aa).

2 consecutive transmembrane segments (helical) span residues 14-34 (AALT…ITFY) and 42-62 (FHFP…FSAL). N-linked (GlcNAc...) asparagine glycosylation is present at N102. The next 7 membrane-spanning stretches (helical) occupy residues 104 to 124 (SFLY…VLFI), 136 to 156 (LRAA…MFTY), 166 to 186 (FALV…TQIL), 202 to 222 (FHLQ…FEGL), 238 to 258 (LLLW…GLGF), 272 to 292 (LSIA…HLLG), and 295 to 315 (ISLL…LHVA). S335 and S336 each carry phosphoserine.

It belongs to the TPT transporter family. SLC35C subfamily.

The protein localises to the golgi apparatus. Its subcellular location is the cis-Golgi network membrane. The protein resides in the endoplasmic reticulum-Golgi intermediate compartment membrane. In terms of biological role, may play an important role in the cellular response to tissue hypoxia. May be either a GDP-fucose transporter that competes with SLC35C1 for GDP-fucose, or a factor that otherwise enhances the fucosylation of Notch and is required for optimal Notch signaling in mammalian cells. This is Solute carrier family 35 member C2 (Slc35c2) from Mus musculus (Mouse).